A 281-amino-acid polypeptide reads, in one-letter code: Bis(5'-nucleosyl)-tetraphosphatase, symmetrical (281 aa).

Belongs to the Ap4A hydrolase family.

It carries out the reaction P(1),P(4)-bis(5'-adenosyl) tetraphosphate + H2O = 2 ADP + 2 H(+). Functionally, hydrolyzes diadenosine 5',5'''-P1,P4-tetraphosphate to yield ADP. The polypeptide is Bis(5'-nucleosyl)-tetraphosphatase, symmetrical (Pectobacterium carotovorum subsp. carotovorum (strain PC1)).